We begin with the raw amino-acid sequence, 146 residues long: Ribosome maturation factor RimP (146 aa).

The protein belongs to the RimP family.

It is found in the cytoplasm. Its function is as follows. Required for maturation of 30S ribosomal subunits. The chain is Ribosome maturation factor RimP from Helicobacter pylori (strain G27).